Consider the following 434-residue polypeptide: Enolase (434 aa).

Glutamine 163 contributes to the (2R)-2-phosphoglycerate binding site. The active-site Proton donor is glutamate 205. The Mg(2+) site is built by aspartate 242, glutamate 289, and aspartate 316. (2R)-2-phosphoglycerate is bound by residues lysine 341, arginine 370, serine 371, and lysine 392. Lysine 341 functions as the Proton acceptor in the catalytic mechanism.

Belongs to the enolase family. Mg(2+) is required as a cofactor.

The protein localises to the cytoplasm. It is found in the secreted. It localises to the cell surface. It carries out the reaction (2R)-2-phosphoglycerate = phosphoenolpyruvate + H2O. The protein operates within carbohydrate degradation; glycolysis; pyruvate from D-glyceraldehyde 3-phosphate: step 4/5. In terms of biological role, catalyzes the reversible conversion of 2-phosphoglycerate (2-PG) into phosphoenolpyruvate (PEP). It is essential for the degradation of carbohydrates via glycolysis. The protein is Enolase of Lacticaseibacillus paracasei (strain ATCC 334 / BCRC 17002 / CCUG 31169 / CIP 107868 / KCTC 3260 / NRRL B-441) (Lactobacillus paracasei).